A 315-amino-acid chain; its full sequence is MSQLDALREMTVVVADTGDIEAIKQYQPQDATTNPSLILSASALPQYASLIDDAVAYAKARSDDKAQQLIDAEDKLAVNIGLEILKIVPGRISTEVDARLSYDTKATIEKARQIMKLYNDAGISNDRILIKIASTWQGIRAAEVLEKEGINCNLTLLFSQAQARACAEAGVYLISPFVGRILDWYKAAEKKEYAPAEDPGVISVTNIYNYYKQYGYQTVVMGASFRNVGEITEIAGCDRLTIAPPLLKELAESNAPLVRKLEYKGEVKTRPAPLTEAEFYWQHNQDPMAIEKLAEGIRKFAVDIEKLEAMLAAKL.

K131 (schiff-base intermediate with substrate) is an active-site residue.

Belongs to the transaldolase family. Type 1 subfamily. In terms of assembly, homodimer.

It localises to the cytoplasm. It catalyses the reaction D-sedoheptulose 7-phosphate + D-glyceraldehyde 3-phosphate = D-erythrose 4-phosphate + beta-D-fructose 6-phosphate. The protein operates within carbohydrate degradation; pentose phosphate pathway; D-glyceraldehyde 3-phosphate and beta-D-fructose 6-phosphate from D-ribose 5-phosphate and D-xylulose 5-phosphate (non-oxidative stage): step 2/3. Functionally, transaldolase is important for the balance of metabolites in the pentose-phosphate pathway. The polypeptide is Transaldolase (Actinobacillus pleuropneumoniae serotype 7 (strain AP76)).